Here is a 166-residue protein sequence, read N- to C-terminus: Fer3-like protein (166 aa).

A disordered region spans residues 57–88; it reads FEEGDPEEEECEVDQGDGEEEEEEERGRGVSL. Positions 60-80 are enriched in acidic residues; that stretch reads GDPEEEECEVDQGDGEEEEEE. The bHLH domain occupies 101-153; sequence AQRQAANIRERKRMFNLNEAFDQLRRKVPTFAYEKRLSRIETLRLAIVYISFM.

As to quaternary structure, heterodimer with TCF3/E12. Interacts with the bHLH domain of TCF3/E12.

Its subcellular location is the nucleus. In terms of biological role, transcription factor that binds to the E-box and functions as inhibitor of transcription. DNA binding requires dimerization with an E protein. Inhibits transcription activation by ASCL1/MASH1 by sequestering E proteins. In Homo sapiens (Human), this protein is Fer3-like protein (FERD3L).